A 411-amino-acid chain; its full sequence is Corticotropin-releasing factor receptor 2 (411 aa).

Positions 1-19 (MDAALLHSLLEANCSLALA) form a signal peptide, not cleaved. The Extracellular portion of the chain corresponds to 1–108 (MDAALLHSLL…EPILDDKQRK (108 aa)). 5 N-linked (GlcNAc...) asparagine glycosylation sites follow: asparagine 13, asparagine 41, asparagine 74, asparagine 86, and asparagine 94. Cystine bridges form between cysteine 14–cysteine 50, cysteine 40–cysteine 83, tryptophan 51–arginine 77, and cysteine 64–cysteine 98. Residues 109–139 (YDLHYRIALVVNYLGHCVSVAALVAAFLLFL) traverse the membrane as a helical segment. Topologically, residues 140 to 146 (ALRSIRC) are cytoplasmic. A helical membrane pass occupies residues 147–171 (LRNVIHWNLITTFILRNVMWFLLQL). Residues 172–185 (VDHEVHESNEVWCR) lie on the Extracellular side of the membrane. An intrachain disulfide couples cysteine 184 to cysteine 254. The chain crosses the membrane as a helical span at residues 186-214 (CITTIFNYFVVTNFFWMFVEGCYLHTAIV). Over 215–221 (MTYSTER) the chain is Cytoplasmic. The chain crosses the membrane as a helical span at residues 222–249 (LRKCLFLFIGWCIPFPIIVAWAIGKLYY). Residues 250-265 (ENEQCWFGKEPGDLVD) are Extracellular-facing. A helical transmembrane segment spans residues 266 to 291 (YIYQGPIILVLLINFVFLFNIVRILM). At 292–302 (TKLRASTTSET) the chain is on the cytoplasmic side. The chain crosses the membrane as a helical span at residues 303–327 (IQYRKAVKATLVLLPLLGITYMLFF). Over 328 to 334 (VNPGEDD) the chain is Extracellular. Residues 335-364 (LSQIMFIYFNSFLQSFQGFFVSVFYCFFNG) traverse the membrane as a helical segment. The Cytoplasmic portion of the chain corresponds to 365-411 (EVRSAVRKRWHRWQDHHSLRVPMARAMSIPTSPTRISFHSIKQTAAV).

This sequence belongs to the G-protein coupled receptor 2 family. Monomer. Interacts (via N-terminal extracellular domain) with CRF, UCN, UCN2 and UCN3. Has highest affinity for UCN, and considerably lower affinity for CRF, UNC2 and UCN3. In terms of processing, a N-glycosylation site within the signal peptide impedes its proper cleavage and function.

It localises to the cell membrane. In terms of biological role, G-protein coupled receptor for CRH (corticotropin-releasing factor), UCN (urocortin), UCN2 and UCN3. Has high affinity for UCN. Ligand binding causes a conformation change that triggers signaling via guanine nucleotide-binding proteins (G proteins) and down-stream effectors, such as adenylate cyclase. Promotes the activation of adenylate cyclase, leading to increased intracellular cAMP levels. The polypeptide is Corticotropin-releasing factor receptor 2 (CRHR2) (Homo sapiens (Human)).